We begin with the raw amino-acid sequence, 258 residues long: Thiazole synthase 2 (258 aa).

Residue K97 is the Schiff-base intermediate with DXP of the active site. 1-deoxy-D-xylulose 5-phosphate contacts are provided by residues G158, 184-185 (AG), and 206-207 (NT).

This sequence belongs to the ThiG family. Homotetramer. Forms heterodimers with either ThiH or ThiS.

Its subcellular location is the cytoplasm. The enzyme catalyses [ThiS sulfur-carrier protein]-C-terminal-Gly-aminoethanethioate + 2-iminoacetate + 1-deoxy-D-xylulose 5-phosphate = [ThiS sulfur-carrier protein]-C-terminal Gly-Gly + 2-[(2R,5Z)-2-carboxy-4-methylthiazol-5(2H)-ylidene]ethyl phosphate + 2 H2O + H(+). It functions in the pathway cofactor biosynthesis; thiamine diphosphate biosynthesis. Catalyzes the rearrangement of 1-deoxy-D-xylulose 5-phosphate (DXP) to produce the thiazole phosphate moiety of thiamine. Sulfur is provided by the thiocarboxylate moiety of the carrier protein ThiS. In vitro, sulfur can be provided by H(2)S. The protein is Thiazole synthase 2 of Syntrophotalea carbinolica (strain DSM 2380 / NBRC 103641 / GraBd1) (Pelobacter carbinolicus).